Reading from the N-terminus, the 333-residue chain is HTH-type transcriptional regulator Cphy_2742 (333 aa).

Residues 1-55 (MNIYDVSQKAGVSIATVSRVINGNPNVSEKTKQKVLDVMKEIGYTPNVFARGLGL) form the HTH lacI-type domain. Residues 3 to 22 (IYDVSQKAGVSIATVSRVIN) constitute a DNA-binding region (H-T-H motif).

The protein resides in the cytoplasm. Involved in control of pectin and galacturonic acid metabolism. Probably represses a comprehensive set of pectin fermentation genes by binding a conserved palindrome at or downstream of their transcription start site to block transcription. In the presence of galacturonic acid may activate transcription of acetate synthesis and other aspects of carbon metabolism. The sequence is that of HTH-type transcriptional regulator Cphy_2742 from Lachnoclostridium phytofermentans (strain ATCC 700394 / DSM 18823 / ISDg) (Clostridium phytofermentans).